Consider the following 119-residue polypeptide: FAD-linked sulfhydryl oxidase (119 aa).

The ERV/ALR sulfhydryl oxidase domain occupies 1–97 (MLHWGPKFWR…ISWSEYKNIY (97 aa)). Residues Cys44 and Cys47 are joined by a disulfide bond.

The protein belongs to the asfivirus B119L family. As to quaternary structure, interacts with A151R. The cofactor is FAD.

The protein localises to the host cytoplasm. It is found in the virion. The enzyme catalyses 2 R'C(R)SH + O2 = R'C(R)S-S(R)CR' + H2O2. In terms of biological role, FAD-dependent sulfhydryl oxidase that catalyzes the formation of disulfide bonds in viral proteins produced in the cell cytoplasm. Involved in virion maturation. The polypeptide is FAD-linked sulfhydryl oxidase (Ornithodoros (relapsing fever ticks)).